A 1180-amino-acid chain; its full sequence is DNA-directed RNA polymerase subunit beta' (1180 aa).

Zn(2+) is bound by residues C60, C62, C75, and C78. Residues D449, D451, and D453 each coordinate Mg(2+). Zn(2+)-binding residues include C792, C872, C879, and C882.

The protein belongs to the RNA polymerase beta' chain family. The RNAP catalytic core consists of 2 alpha, 1 beta, 1 beta' and 1 omega subunit. When a sigma factor is associated with the core the holoenzyme is formed, which can initiate transcription. It depends on Mg(2+) as a cofactor. Zn(2+) is required as a cofactor.

It carries out the reaction RNA(n) + a ribonucleoside 5'-triphosphate = RNA(n+1) + diphosphate. Its function is as follows. DNA-dependent RNA polymerase catalyzes the transcription of DNA into RNA using the four ribonucleoside triphosphates as substrates. The sequence is that of DNA-directed RNA polymerase subunit beta' from Heliobacterium modesticaldum (strain ATCC 51547 / Ice1).